The primary structure comprises 98 residues: Integration host factor subunit alpha (98 aa).

Residues Asn-51–Ile-71 are disordered. A compositionally biased stretch (basic and acidic residues) spans Asp-53–Glu-69.

It belongs to the bacterial histone-like protein family. In terms of assembly, heterodimer of an alpha and a beta chain.

This protein is one of the two subunits of integration host factor, a specific DNA-binding protein that functions in genetic recombination as well as in transcriptional and translational control. The chain is Integration host factor subunit alpha from Vibrio parahaemolyticus serotype O3:K6 (strain RIMD 2210633).